The chain runs to 107 residues: Integration host factor subunit beta (107 aa).

Residues 76-107 are disordered; sequence FVPHFKPGKELRERVDGRAGEPLKADDPDDER. The span at 82-101 shows a compositional bias: basic and acidic residues; it reads PGKELRERVDGRAGEPLKAD.

The protein belongs to the bacterial histone-like protein family. Heterodimer of an alpha and a beta chain.

Its function is as follows. This protein is one of the two subunits of integration host factor, a specific DNA-binding protein that functions in genetic recombination as well as in transcriptional and translational control. This Burkholderia cenocepacia (strain ATCC BAA-245 / DSM 16553 / LMG 16656 / NCTC 13227 / J2315 / CF5610) (Burkholderia cepacia (strain J2315)) protein is Integration host factor subunit beta.